Reading from the N-terminus, the 285-residue chain is Para-Rep C6 (285 aa).

Residues 3-99 (TRQSTSWVFT…VAGPWEYGLF (97 aa)) enclose the CRESS-DNA virus Rep endonuclease domain. The RCR-1 motif lies at 10 to 13 (VFTL). E36 and H42 together coordinate a divalent metal cation. The short motif at 42 to 44 (HLQ) is the RCR-2 element. A Nuclear localization signal motif is present at residues 52–74 (RNTTLRQAKYIFNGLNPHLEIAR). The active-site For DNA cleavage activity is the Y82. The RCR-3 signature appears at 82–85 (YAMK). A divalent metal cation is bound at residue D87. The short motif at 99 to 105 (FIKRGSH) is the Nuclear localization signal element. 175-183 (GPAGNEGKS) provides a ligand contact to ATP.

Belongs to the nanoviridea/circoviridae replication-associated protein family. In terms of assembly, homooligomer (Potential). Rep binds to repeated DNA motifs (iterons). Mg(2+) is required as a cofactor. Requires Mn(2+) as cofactor.

It localises to the host nucleus. The enzyme catalyses ATP + H2O = ADP + phosphate + H(+). In terms of biological role, initiates and terminates the replication only of its own subviral DNA molecule. The closed circular ssDNA genome is first converted to a superhelical dsDNA. Rep binds a specific hairpin at the genome origin of replication. Introduces an endonucleolytic nick within the intergenic region of the genome, thereby initiating the rolling circle replication (RCR). Following cleavage, binds covalently to the 5'-phosphate of DNA as a tyrosyl ester. The cleavage gives rise to a free 3'-OH that serves as a primer for the cellular DNA polymerase. The polymerase synthesizes the (+) strand DNA by rolling circle mechanism. After one round of replication, a Rep-catalyzed nucleotidyl transfer reaction releases a circular single-stranded virus genome, thereby terminating the replication. Displays origin-specific DNA cleavage, nucleotidyl transferase, ATPase and helicase activities. This is Para-Rep C6 (C6) from Subterranean clover stunt C6 alphasatellite (SCSC6A).